Reading from the N-terminus, the 178-residue chain is Putative adenylate kinase (178 aa).

Residues G10, G12, K13, S14, and S15 each coordinate ATP. The NMP stretch occupies residues T29–I50. Positions G94 to E104 are LID. R95 is an ATP binding site.

The protein belongs to the adenylate kinase family. AK6 subfamily. As to quaternary structure, interacts with uS11. Not a structural component of 40S pre-ribosomes, but transiently interacts with them by binding to uS11.

The catalysed reaction is AMP + ATP = 2 ADP. The enzyme catalyses ATP + H2O = ADP + phosphate + H(+). Functionally, broad-specificity nucleoside monophosphate (NMP) kinase that catalyzes the reversible transfer of the terminal phosphate group between nucleoside triphosphates and monophosphates. Also has ATPase activity. Involved in the late maturation steps of the 30S ribosomal particles, specifically 16S rRNA maturation. While NMP activity is not required for ribosome maturation, ATPase activity is. Associates transiently with small ribosomal subunit protein uS11. ATP hydrolysis breaks the interaction with uS11. May temporarily remove uS11 from the ribosome to enable a conformational change of the ribosomal RNA that is needed for the final maturation step of the small ribosomal subunit. This chain is Putative adenylate kinase, found in Archaeoglobus fulgidus (strain ATCC 49558 / DSM 4304 / JCM 9628 / NBRC 100126 / VC-16).